The primary structure comprises 130 residues: 3-aminoacrylate deaminase RutC (130 aa).

The protein belongs to the RutC family.

It carries out the reaction (Z)-3-aminoacrylate + H2O + H(+) = 3-oxopropanoate + NH4(+). In terms of biological role, involved in pyrimidine catabolism. Catalyzes the deamination of 3-aminoacrylate to malonic semialdehyde, a reaction that can also occur spontaneously. RutC may facilitate the reaction and modulate the metabolic fitness, rather than catalyzing essential functions. In Haliangium ochraceum (strain DSM 14365 / JCM 11303 / SMP-2), this protein is 3-aminoacrylate deaminase RutC.